Here is a 404-residue protein sequence, read N- to C-terminus: XK-related protein 8 (404 aa).

A run of 8 helical transmembrane segments spans residues 14-34, 44-64, 167-187, 206-226, 227-247, 263-283, 292-312, and 319-339; these read FVFS…DVWV, FFWF…VQMF, AVQF…VVDY, SLIY…ALAL, FASV…LVFV, GEWL…FNVA, AIYH…WWCC, and EPYA…GLLF.

This sequence belongs to the XK family.

It localises to the cell membrane. It carries out the reaction a 1,2-diacyl-sn-glycero-3-phospho-L-serine(in) = a 1,2-diacyl-sn-glycero-3-phospho-L-serine(out). Functionally, phospholipid scramblase that promotes phosphatidylserine exposure on apoptotic cell surface, possibly by mediating phospholipid scrambling. Phosphatidylserine is a specific marker only present at the surface of apoptotic cells and acts as a specific signal for engulfment. This is XK-related protein 8 from Tetraodon nigroviridis (Spotted green pufferfish).